The sequence spans 764 residues: FAST kinase domain-containing protein 5, mitochondrial (764 aa).

The transit peptide at 1 to 27 (MAATLKSLKLLRYQAFCSPSAFGAVRS) directs the protein to the mitochondrion. The tract at residues 68 to 94 (IPTTSSARPGLEFSKTSSSKASTLQLG) is disordered. A compositionally biased stretch (polar residues) spans 81-93 (SKTSSSKASTLQL). Position 95 is a phosphoserine (serine 95). N6-acetyllysine is present on lysine 507. In terms of domain architecture, RAP spans 697–757 (LAIQFTNRNQ…RLEKLAFLHE (61 aa)).

It belongs to the FAST kinase family. Found in a complex with GRSF1, DDX28, DHX30 and FASTKD2. Associates with the 12S mitochondrial rRNA (12S mt-rRNA).

It is found in the mitochondrion matrix. The protein localises to the mitochondrion nucleoid. Functionally, plays an important role in the processing of non-canonical mitochondrial mRNA precursors. The protein is FAST kinase domain-containing protein 5, mitochondrial (FASTKD5) of Pongo abelii (Sumatran orangutan).